Here is a 463-residue protein sequence, read N- to C-terminus: Cysteine--tRNA ligase (463 aa).

Position 27 (Cys27) interacts with Zn(2+). The 'HIGH' region motif lies at 29 to 39 (MTVYDYCHLGH). Positions 208, 233, and 237 each coordinate Zn(2+). The 'KMSKS' region motif lies at 265–269 (KMSKS). Lys268 contributes to the ATP binding site.

This sequence belongs to the class-I aminoacyl-tRNA synthetase family. Monomer. The cofactor is Zn(2+).

Its subcellular location is the cytoplasm. It catalyses the reaction tRNA(Cys) + L-cysteine + ATP = L-cysteinyl-tRNA(Cys) + AMP + diphosphate. The sequence is that of Cysteine--tRNA ligase from Marinobacter nauticus (strain ATCC 700491 / DSM 11845 / VT8) (Marinobacter aquaeolei).